The following is a 134-amino-acid chain: Interleukin-5 (134 aa).

Residues 1–19 form the signal peptide; sequence MRMLLHLSLLALGAAYVYA. A glycan (O-linked (GalNAc...) threonine) is linked at threonine 22. N-linked (GlcNAc...) asparagine glycosylation is found at asparagine 47 and asparagine 90.

This sequence belongs to the IL-5 family. As to quaternary structure, homodimer; disulfide-linked. Interacts with IL5RA. Interacts with CSF2RB.

The protein localises to the secreted. Functionally, homodimeric cytokine expressed predominantly by T-lymphocytes and NK cells that plays an important role in the survival, differentiation, and chemotaxis of eosinophils. Also acts on activated and resting B-cells to induce immunoglobulin production, growth, and differentiation. Mechanistically, exerts its biological effects through a receptor composed of IL5RA subunit and the cytokine receptor common subunit beta/CSF2RB. Binding to the receptor leads to activation of various kinases including LYN, SYK and JAK2 and thereby propagates signals through the RAS-MAPK and JAK-STAT5 pathways respectively. The sequence is that of Interleukin-5 (IL5) from Macaca mulatta (Rhesus macaque).